The sequence spans 452 residues: Eukaryotic translation initiation factor 4B3 (452 aa).

At Ala-2 the chain carries N-acetylalanine. A disordered region spans residues 20-282 (EEHEAELKQQ…PSGGSRPRLV (263 aa)). Over residues 28–37 (QQPSPTNQKS) the composition is skewed to polar residues. Residues 98–110 (PRERSAEELDRSK) are compositionally biased toward basic and acidic residues. The segment covering 111 to 122 (LGGGFRSYGGGR) has biased composition (gly residues). Over residues 126-136 (ESSSSRWGSSR) the composition is skewed to low complexity. The span at 137 to 156 (VSEDGERRGGGFNRDREPSR) shows a compositional bias: basic and acidic residues. 2 consecutive short sequence motifs (nuclear localization signal) follow at residues 172–179 (AKKPISGN) and 215–222 (PRRFVSSN). Basic and acidic residues predominate over residues 227-243 (DRFEKRGSFESLSRNRD). Phosphoserine is present on residues Ser-234, Ser-270, and Ser-300. Positions 265–280 (GAANGSPPPSGGSRPR) are enriched in low complexity. The tract at residues 349 to 452 (AAMEKPNEKS…AKKEETEDKI (104 aa)) is disordered. Residues 369-386 (GRKDEERIERSWRKSTEH) are compositionally biased toward basic and acidic residues. A compositionally biased stretch (acidic residues) spans 387–397 (SEEDAQEEEPA). 2 stretches are compositionally biased toward basic and acidic residues: residues 400–419 (GAKK…KKEE) and 441–452 (EEAKKEETEDKI).

It belongs to the eIF-4 subunit B family. As to quaternary structure, homodimer. Nonspherical monomer. mRNA-discriminating component of initiation complexes. Interacts with MAD2. Phosphorylated.

Its subcellular location is the nucleus. Promotes the eIF4F and eIF4A RNA-dependent ATP-hydrolysis activity with different efficiency depending on mRNAs, thus providing mRNA discrimination during initiation of translation. In Arabidopsis thaliana (Mouse-ear cress), this protein is Eukaryotic translation initiation factor 4B3.